A 174-amino-acid chain; its full sequence is Large ribosomal subunit protein uL15 (174 aa).

2 disordered regions span residues 1 to 56 (MKLH…GQMR) and 150 to 174 (VERR…TPGA). Gly residues predominate over residues 21 to 35 (RGIGSGKGKTGGKGM).

The protein belongs to the universal ribosomal protein uL15 family. In terms of assembly, part of the 50S ribosomal subunit.

In terms of biological role, binds to the 23S rRNA. This Roseiflexus castenholzii (strain DSM 13941 / HLO8) protein is Large ribosomal subunit protein uL15.